Reading from the N-terminus, the 888-residue chain is Alanine--tRNA ligase (888 aa).

The Zn(2+) site is built by His-564, His-568, Cys-676, and His-680.

It belongs to the class-II aminoacyl-tRNA synthetase family. The cofactor is Zn(2+).

The protein resides in the cytoplasm. It catalyses the reaction tRNA(Ala) + L-alanine + ATP = L-alanyl-tRNA(Ala) + AMP + diphosphate. Catalyzes the attachment of alanine to tRNA(Ala) in a two-step reaction: alanine is first activated by ATP to form Ala-AMP and then transferred to the acceptor end of tRNA(Ala). Also edits incorrectly charged Ser-tRNA(Ala) and Gly-tRNA(Ala) via its editing domain. This Bartonella tribocorum (strain CIP 105476 / IBS 506) protein is Alanine--tRNA ligase.